We begin with the raw amino-acid sequence, 298 residues long: uncharacterized protein (298 aa).

10 consecutive transmembrane segments (helical) span residues 5-25, 36-56, 76-96, 97-117, 124-144, 147-167, 181-201, 216-236, 244-264, and 272-292; these read ILFGVSMILLANLCFGIMSAF, MENVFYRSITMTLLLLLIYPF, VVVGGLAMLAFFYNIEKISLA, TATAFSQCAPIYTVLLSPLLL, STLISACIGIVGVVLISDPSV, VGPVEIFMGILSGIFVSLAYI, VILAFAFGMSLLGLVGMFIDI, ILWISLIGISGTLGQYFLTYA, IIAPIEYTRIVWGLLFGLYLG, and SSLGVALILCSGLLIALPALL. The EamA 1 domain maps to 17–141; it reads LCFGIMSAFV…GIVGVVLISD (125 aa). The 106-residue stretch at 183–288 folds into the EamA 2 domain; that stretch reads LAFAFGMSLL…ILCSGLLIAL (106 aa).

It belongs to the EamA transporter family.

Its subcellular location is the cell membrane. This is an uncharacterized protein from Helicobacter pylori (strain ATCC 700392 / 26695) (Campylobacter pylori).